The primary structure comprises 405 residues: Tryptophan synthase beta chain (405 aa).

K86 carries the N6-(pyridoxal phosphate)lysine modification.

Belongs to the TrpB family. Tetramer of two alpha and two beta chains. Pyridoxal 5'-phosphate serves as cofactor.

It catalyses the reaction (1S,2R)-1-C-(indol-3-yl)glycerol 3-phosphate + L-serine = D-glyceraldehyde 3-phosphate + L-tryptophan + H2O. It participates in amino-acid biosynthesis; L-tryptophan biosynthesis; L-tryptophan from chorismate: step 5/5. Functionally, the beta subunit is responsible for the synthesis of L-tryptophan from indole and L-serine. The polypeptide is Tryptophan synthase beta chain (Shewanella piezotolerans (strain WP3 / JCM 13877)).